The primary structure comprises 123 residues: Small ribosomal subunit protein uS11 (123 aa).

The protein belongs to the universal ribosomal protein uS11 family. As to quaternary structure, part of the 30S ribosomal subunit. Interacts with proteins S7 and S18. Binds to IF-3.

Located on the platform of the 30S subunit, it bridges several disparate RNA helices of the 16S rRNA. Forms part of the Shine-Dalgarno cleft in the 70S ribosome. The protein is Small ribosomal subunit protein uS11 of Coxiella burnetii (strain CbuG_Q212) (Coxiella burnetii (strain Q212)).